We begin with the raw amino-acid sequence, 207 residues long: Small ribosomal subunit protein uS4c (207 aa).

Positions 20–52 are disordered; that stretch reads GFSKKIDRNHTPPGQHGWKKKASDQKKSKESQY. A compositionally biased stretch (basic and acidic residues) spans 40–52; it reads KASDQKKSKESQY. The S4 RNA-binding domain maps to 97 to 158; that stretch reads MRLDNIIYRL…NSQQLIKNYL (62 aa).

It belongs to the universal ribosomal protein uS4 family. In terms of assembly, part of the 30S ribosomal subunit. Contacts protein S5. The interaction surface between S4 and S5 is involved in control of translational fidelity.

It is found in the plastid. Functionally, one of the primary rRNA binding proteins, it binds directly to 16S rRNA where it nucleates assembly of the body of the 30S subunit. In terms of biological role, with S5 and S12 plays an important role in translational accuracy. This chain is Small ribosomal subunit protein uS4c (rps4), found in Prototheca wickerhamii.